The chain runs to 388 residues: Queuine tRNA-ribosyltransferase (388 aa).

The active-site Proton acceptor is aspartate 90. Substrate-binding positions include 90 to 94 (DSGGF), aspartate 144, glutamine 205, and glycine 232. The segment at 263 to 269 (GVGTPED) is RNA binding. Aspartate 282 (nucleophile) is an active-site residue. An RNA binding; important for wobble base 34 recognition region spans residues 287–291 (TRNAR). The Zn(2+) site is built by cysteine 320, cysteine 322, cysteine 325, and histidine 351.

It belongs to the queuine tRNA-ribosyltransferase family. In terms of assembly, homodimer. Within each dimer, one monomer is responsible for RNA recognition and catalysis, while the other monomer binds to the replacement base PreQ1. Zn(2+) serves as cofactor.

It carries out the reaction 7-aminomethyl-7-carbaguanine + guanosine(34) in tRNA = 7-aminomethyl-7-carbaguanosine(34) in tRNA + guanine. It functions in the pathway tRNA modification; tRNA-queuosine biosynthesis. In terms of biological role, catalyzes the base-exchange of a guanine (G) residue with the queuine precursor 7-aminomethyl-7-deazaguanine (PreQ1) at position 34 (anticodon wobble position) in tRNAs with GU(N) anticodons (tRNA-Asp, -Asn, -His and -Tyr). Catalysis occurs through a double-displacement mechanism. The nucleophile active site attacks the C1' of nucleotide 34 to detach the guanine base from the RNA, forming a covalent enzyme-RNA intermediate. The proton acceptor active site deprotonates the incoming PreQ1, allowing a nucleophilic attack on the C1' of the ribose to form the product. After dissociation, two additional enzymatic reactions on the tRNA convert PreQ1 to queuine (Q), resulting in the hypermodified nucleoside queuosine (7-(((4,5-cis-dihydroxy-2-cyclopenten-1-yl)amino)methyl)-7-deazaguanosine). This is Queuine tRNA-ribosyltransferase from Campylobacter curvus (strain 525.92).